The primary structure comprises 175 residues: MGRTLESKKQIVKKIEDLLDNSEMALVLDYKGLSTKEMSDLRSRLQQSDGVCKVTKNTLMRQAIKGKNSWTGLDSLLTGTNAFVLIKGDVGSAVKAVQAFQKETQKSETKGGLFEGKLLSQDEIKAIAKLPSKEALMGQIAGALNSITSKIAIGINEVPSGLARSLKQHSESGES.

This sequence belongs to the universal ribosomal protein uL10 family. Part of the ribosomal stalk of the 50S ribosomal subunit. The N-terminus interacts with L11 and the large rRNA to form the base of the stalk. The C-terminus forms an elongated spine to which L12 dimers bind in a sequential fashion forming a multimeric L10(L12)X complex.

Forms part of the ribosomal stalk, playing a central role in the interaction of the ribosome with GTP-bound translation factors. In Prochlorococcus marinus (strain NATL1A), this protein is Large ribosomal subunit protein uL10.